The chain runs to 184 residues: 1,6-anhydro-N-acetylmuramyl-L-alanine amidase AmpD (184 aa).

Residues 30-171 enclose the N-acetylmuramoyl-L-alanine amidase domain; it reads QDISLLVIHY…ISPKRKIDPG (142 aa). His38 contacts Zn(2+). Glu120 acts as the Proton acceptor in catalysis. His159 and Asp169 together coordinate Zn(2+).

Belongs to the N-acetylmuramoyl-L-alanine amidase 2 family. It depends on Zn(2+) as a cofactor.

The protein localises to the cytoplasm. It catalyses the reaction Hydrolyzes the link between N-acetylmuramoyl residues and L-amino acid residues in certain cell-wall glycopeptides.. Involved in cell wall peptidoglycan recycling. Specifically cleaves the amide bond between the lactyl group of N-acetylmuramic acid and the alpha-amino group of the L-alanine in degradation products containing an anhydro N-acetylmuramyl moiety. This chain is 1,6-anhydro-N-acetylmuramyl-L-alanine amidase AmpD (ampD), found in Haemophilus influenzae (strain ATCC 51907 / DSM 11121 / KW20 / Rd).